The primary structure comprises 147 residues: Large ribosomal subunit protein uL15 (147 aa).

The interval 16-63 (SSRARVGRGIGSGLGKTAGRGHKGSFARKGGGKIKPGFEGGQTPMQRR) is disordered. Positions 23 to 33 (RGIGSGLGKTA) are enriched in gly residues. Basic residues predominate over residues 34–47 (GRGHKGSFARKGGG).

The protein belongs to the universal ribosomal protein uL15 family. Part of the 50S ribosomal subunit.

Binds to the 23S rRNA. This is Large ribosomal subunit protein uL15 from Xylella fastidiosa (strain Temecula1 / ATCC 700964).